Reading from the N-terminus, the 75-residue chain is ATP synthase subunit 9, mitochondrial (75 aa).

2 helical membrane passes run 10–30 (LVLG…GILF) and 55–75 (FALV…VYFI).

The protein belongs to the ATPase C chain family. As to quaternary structure, F-type ATPases have 2 components, CF(1) - the catalytic core - and CF(0) - the membrane proton channel. CF(1) has five subunits: alpha(3), beta(3), gamma(1), delta(1), epsilon(1). CF(0) has three main subunits: a, b and c.

It is found in the mitochondrion membrane. Its function is as follows. Mitochondrial membrane ATP synthase (F(1)F(0) ATP synthase or Complex V) produces ATP from ADP in the presence of a proton gradient across the membrane which is generated by electron transport complexes of the respiratory chain. F-type ATPases consist of two structural domains, F(1) - containing the extramembraneous catalytic core and F(0) - containing the membrane proton channel, linked together by a central stalk and a peripheral stalk. During catalysis, ATP synthesis in the catalytic domain of F(1) is coupled via a rotary mechanism of the central stalk subunits to proton translocation. Part of the complex F(0) domain. A homomeric c-ring of probably 10 subunits is part of the complex rotary element. This chain is ATP synthase subunit 9, mitochondrial (ATP9), found in Paramecium tetraurelia.